The chain runs to 332 residues: Ketol-acid reductoisomerase (NADP(+)) (332 aa).

The 182-residue stretch at Met1–Thr182 folds into the KARI N-terminal Rossmann domain. Residues Tyr25 to Gln28 and Asp83 to Gln86 each bind NADP(+). The active site involves His108. Residue Gly134 coordinates NADP(+). Positions Thr183–Leu328 constitute a KARI C-terminal knotted domain. The Mg(2+) site is built by Asp191, Glu195, Glu227, and Glu231. Ser252 lines the substrate pocket.

Belongs to the ketol-acid reductoisomerase family. Mg(2+) is required as a cofactor.

The enzyme catalyses (2R)-2,3-dihydroxy-3-methylbutanoate + NADP(+) = (2S)-2-acetolactate + NADPH + H(+). The catalysed reaction is (2R,3R)-2,3-dihydroxy-3-methylpentanoate + NADP(+) = (S)-2-ethyl-2-hydroxy-3-oxobutanoate + NADPH + H(+). The protein operates within amino-acid biosynthesis; L-isoleucine biosynthesis; L-isoleucine from 2-oxobutanoate: step 2/4. Its pathway is amino-acid biosynthesis; L-valine biosynthesis; L-valine from pyruvate: step 2/4. Its function is as follows. Involved in the biosynthesis of branched-chain amino acids (BCAA). Catalyzes an alkyl-migration followed by a ketol-acid reduction of (S)-2-acetolactate (S2AL) to yield (R)-2,3-dihydroxy-isovalerate. In the isomerase reaction, S2AL is rearranged via a Mg-dependent methyl migration to produce 3-hydroxy-3-methyl-2-ketobutyrate (HMKB). In the reductase reaction, this 2-ketoacid undergoes a metal-dependent reduction by NADPH to yield (R)-2,3-dihydroxy-isovalerate. The polypeptide is Ketol-acid reductoisomerase (NADP(+)) (Dehalococcoides mccartyi (strain ATCC BAA-2100 / JCM 16839 / KCTC 5957 / BAV1)).